Reading from the N-terminus, the 313-residue chain is Pyrimidine-specific ribonucleoside hydrolase RihB (313 aa).

Catalysis depends on Asp11, which acts as the Proton acceptor. Ca(2+) contacts are provided by Asp11, Asp16, and Val124. Substrate is bound by residues Gln227 and His239. A Ca(2+)-binding site is contributed by Asp240.

The protein belongs to the IUNH family. RihB subfamily. In terms of assembly, homotetramer. Ca(2+) serves as cofactor.

It catalyses the reaction a pyrimidine ribonucleoside + H2O = a pyrimidine nucleobase + D-ribose. In terms of biological role, hydrolyzes cytidine or uridine to ribose and cytosine or uracil, respectively. Has a clear preference for cytidine over uridine. Strictly specific for ribonucleosides. This Shigella sonnei (strain Ss046) protein is Pyrimidine-specific ribonucleoside hydrolase RihB.